Reading from the N-terminus, the 258-residue chain is Phosphoadenosine 5'-phosphosulfate reductase (258 aa).

Residue cysteine 244 is the Nucleophile; cysteine thiosulfonate intermediate of the active site.

The protein belongs to the PAPS reductase family. CysH subfamily.

The protein localises to the cytoplasm. The enzyme catalyses [thioredoxin]-disulfide + sulfite + adenosine 3',5'-bisphosphate + 2 H(+) = [thioredoxin]-dithiol + 3'-phosphoadenylyl sulfate. Its pathway is sulfur metabolism; hydrogen sulfide biosynthesis; sulfite from sulfate: step 3/3. Its function is as follows. Catalyzes the formation of sulfite from phosphoadenosine 5'-phosphosulfate (PAPS) using thioredoxin as an electron donor. The polypeptide is Phosphoadenosine 5'-phosphosulfate reductase (Vibrio vulnificus (strain CMCP6)).